Here is a 117-residue protein sequence, read N- to C-terminus: DNA-directed RNA polymerase subunit omega (117 aa).

The protein belongs to the RNA polymerase subunit omega family. As to quaternary structure, the RNAP catalytic core consists of 2 alpha, 1 beta, 1 beta' and 1 omega subunit. When a sigma factor is associated with the core the holoenzyme is formed, which can initiate transcription.

The catalysed reaction is RNA(n) + a ribonucleoside 5'-triphosphate = RNA(n+1) + diphosphate. Functionally, promotes RNA polymerase assembly. Latches the N- and C-terminal regions of the beta' subunit thereby facilitating its interaction with the beta and alpha subunits. This Ruegeria pomeroyi (strain ATCC 700808 / DSM 15171 / DSS-3) (Silicibacter pomeroyi) protein is DNA-directed RNA polymerase subunit omega.